A 103-amino-acid polypeptide reads, in one-letter code: NADH-quinone oxidoreductase subunit K (103 aa).

The next 3 membrane-spanning stretches (helical) occupy residues 6 to 26 (IEYY…GFLL), 30 to 50 (LLVL…TLVA), and 66 to 86 (FFVI…VLAF).

Belongs to the complex I subunit 4L family. As to quaternary structure, NDH-1 is composed of 14 different subunits. Subunits NuoA, H, J, K, L, M, N constitute the membrane sector of the complex.

The protein localises to the cell inner membrane. It catalyses the reaction a quinone + NADH + 5 H(+)(in) = a quinol + NAD(+) + 4 H(+)(out). In terms of biological role, NDH-1 shuttles electrons from NADH, via FMN and iron-sulfur (Fe-S) centers, to quinones in the respiratory chain. The immediate electron acceptor for the enzyme in this species is believed to be ubiquinone. Couples the redox reaction to proton translocation (for every two electrons transferred, four hydrogen ions are translocated across the cytoplasmic membrane), and thus conserves the redox energy in a proton gradient. This chain is NADH-quinone oxidoreductase subunit K, found in Sorangium cellulosum (strain So ce56) (Polyangium cellulosum (strain So ce56)).